Consider the following 574-residue polypeptide: Phosphate permease PHO89 (574 aa).

Over 1–5 the chain is Extracellular; that stretch reads MALHQ. The helical transmembrane segment at 6–26 threads the bilayer; that stretch reads FDYIFAIAMLFAFLDAFNIGA. Residues 27–43 are Cytoplasmic-facing; that stretch reads NDVANSFASSISSRSLK. Residues 44 to 64 traverse the membrane as a helical segment; that stretch reads YWQAMVLAGLCEFLGAVLAGA. Over 65–84 the chain is Extracellular; the sequence is RVSGTIKNNIIDSSIFTNDP. The chain crosses the membrane as a helical span at residues 85–105; the sequence is AVLMLTMTSALIGSSCWLTFA. Residues 106 to 117 are Cytoplasmic-facing; sequence TAIGMPVSTTHS. Residues 118–138 traverse the membrane as a helical segment; sequence IVGGTIGAGIAAGGANGVVWG. At 139-145 the chain is on the extracellular side; sequence WSGVSQI. The helical transmembrane segment at 146–166 threads the bilayer; the sequence is IASWFIAPILAGAIAAIVFSI. At 167–184 the chain is on the cytoplasmic side; that stretch reads SRFSVLEVKSLERSIKNA. The chain crosses the membrane as a helical span at residues 185–205; that stretch reads LLLVGVLVFATFSILTMLIVW. Residues 206–222 lie on the Extracellular side of the membrane; the sequence is KGSPNLHLDDLSETETA. The helical transmembrane segment at 223-243 threads the bilayer; that stretch reads VSIVLTGAIASIVYFIFFYPF. Over 244-354 the chain is Cytoplasmic; sequence YRRKVLDQDW…SLLKQGPKKW (111 aa). The segment at 301–332 is disordered; it reads EDEENKAASNSNDSVKNKEDIQEVDLVRTETE. A compositionally biased stretch (basic and acidic residues) spans 315 to 332; that stretch reads VKNKEDIQEVDLVRTETE. A helical membrane pass occupies residues 355–375; it reads PLLFWLVISHGWTQDVIHAQV. Topologically, residues 376 to 398 are extracellular; that stretch reads NDRDMLSGDLKGMYERSKFYDNR. A helical membrane pass occupies residues 399 to 419; the sequence is VEYIYSVLQAITAATMSFAHG. Residues 420-447 are Cytoplasmic-facing; sequence ANDVANATGPLSAVYVIWKTNTIGAKSE. The helical transmembrane segment at 448–468 threads the bilayer; it reads VPVWVLAYGGVALVIGCWTYG. At 469–503 the chain is on the extracellular side; that stretch reads YNIIKNLGNKMILQSPSRGFSIELAVAITTVMATQ. A helical transmembrane segment spans residues 504–524; sequence LGIPTSTTQIAVGGIVAVGLC. Over 525 to 541 the chain is Cytoplasmic; the sequence is NKDLKSVNWRMVAWCYS. Residues 542–562 form a helical membrane-spanning segment; it reads GWFLTLPIAGLIAGIINGIIL. Residues 563-574 lie on the Extracellular side of the membrane; it reads NAPRFGVEYQMT.

Belongs to the inorganic phosphate transporter (PiT) (TC 2.A.20) family. Forms homodimers and higher order homooligomers.

The protein resides in the cell membrane. It catalyses the reaction 2 Na(+)(out) + phosphate(out) = 2 Na(+)(in) + phosphate(in). Its activity is regulated as follows. Weakly stimulated by Li(+) and K(+). Inhibited by monensin. Inhibited by phosphonoacetic acid. Inhibited by methylphosphonate. Inhibited by dimethylphosphonate. In terms of biological role, sodium-phosphate symporter. Active in early growth phase. The sequence is that of Phosphate permease PHO89 (PHO89) from Saccharomyces cerevisiae (strain ATCC 204508 / S288c) (Baker's yeast).